We begin with the raw amino-acid sequence, 510 residues long: Inositol-3-phosphate synthase (510 aa).

NAD(+)-binding residues include Gly-70, Gly-71, Asn-72, Asn-73, Asp-143, Ile-180, Gln-190, Arg-193, Thr-230, Ala-231, Asn-232, Thr-233, Gly-281, Ser-282, Asp-306, Ser-309, Asn-340, Asn-341, Asp-342, Lys-355, Gly-393, Asp-394, Asp-422, and Ser-423.

It belongs to the myo-inositol 1-phosphate synthase family. Requires NAD(+) as cofactor.

The protein localises to the cytoplasm. Its subcellular location is the cytosol. The protein resides in the nucleus. The catalysed reaction is D-glucose 6-phosphate = 1D-myo-inositol 3-phosphate. The protein operates within polyol metabolism; myo-inositol biosynthesis; myo-inositol from D-glucose 6-phosphate: step 1/2. Key enzyme in myo-inositol biosynthesis pathway that catalyzes the conversion of glucose 6-phosphate to 1-myo-inositol 1-phosphate in a NAD-dependent manner. In Spirodela polyrhiza (Giant duckweed), this protein is Inositol-3-phosphate synthase (TUR1).